The following is a 154-amino-acid chain: uncharacterized protein (154 aa).

Helical transmembrane passes span 20–42 (FRLFLAFNFFVYGLAKVVIGQFG), 62–84 (FFGYSHVYELFIGFGEILAAVLL), 91–109 (ALGAVIFMPIIVNIVLINY), and 113–132 (IGVQDLSTILMVMCLILLWM).

The protein localises to the cell membrane. This is an uncharacterized protein from Bacillus subtilis (strain 168).